We begin with the raw amino-acid sequence, 424 residues long: Protein FAM43A (424 aa).

Acidic residues predominate over residues 261–297 (QQEEELQEEEEEHLEDCLEEEEEEDGVGDGDPAEEEA). 2 disordered regions span residues 261–299 (QQEEELQEEEEEHLEDCLEEEEEEDGVGDGDPAEEEAEA) and 382–424 (LLSG…PYSG). A compositionally biased stretch (low complexity) spans 382–394 (LLSGESTGSESSI). The segment covering 405–418 (SPGNPSGPADSTSL) has biased composition (polar residues).

The protein belongs to the FAM43 family.

The polypeptide is Protein FAM43A (Fam43a) (Mus musculus (Mouse)).